The following is a 451-amino-acid chain: MKTTVDKLSDTRVKLTVNVPFAELDKEIDQAYAAIAQQVSIPGFRKGKAPRQLIDARFGRGPILEQVVNDMLPSRYEQAVTENDLKVIGQPEIDIAKLEDNDFVEFTAEVDIRPEFEVPDFSKISVKVPALETSEEDVDKALEDLASRFGELKDTKRKMKTGDYAIIDITTEVDGTKLDEASHEGMTYRIGDDNLIKGLDTALRGMKTDEDNEFTTTIQSGEHEGDEATVKVHVQQSKERKLPDLDDEFAQMASEFDTIDELREDTKTRVEESKKSEQAAAIRDEVLKAALEEVSFELPSSIVDEQVHAQLHQVMGQLAHDEKALAQLLEAQGTTREEFDADARKSAEESVRTQLFLDALAEIEEPEVSQQELTDHILFTAQSYGMDPNQFIQQLQSSNQLGNLFSDVRRGKALATAICRAEVTDEAGNKVDVDQYFGEIDEDEAEASEEK.

The PPIase FKBP-type domain occupies 162 to 243 (GDYAIIDITT…VQQSKERKLP (82 aa)).

This sequence belongs to the FKBP-type PPIase family. Tig subfamily.

It is found in the cytoplasm. The catalysed reaction is [protein]-peptidylproline (omega=180) = [protein]-peptidylproline (omega=0). Involved in protein export. Acts as a chaperone by maintaining the newly synthesized protein in an open conformation. Functions as a peptidyl-prolyl cis-trans isomerase. The chain is Trigger factor from Corynebacterium aurimucosum (strain ATCC 700975 / DSM 44827 / CIP 107346 / CN-1) (Corynebacterium nigricans).